A 505-amino-acid polypeptide reads, in one-letter code: NADH-quinone oxidoreductase subunit N (505 aa).

A run of 14 helical transmembrane segments spans residues 20–40 (ALAP…GDLF), 59–79 (ALAL…GGVF), 83–103 (GLAA…ALMS), 115–135 (GEYY…VSAG), 137–157 (AIVL…LVAL), 172–192 (FLMG…LYGL), 220–240 (AVVA…TVPF), 251–271 (APTT…FAVL), 285–305 (LWSD…NIAA), 314–334 (MLAY…AACT), 342–362 (AAYL…IIYL), 394–414 (LAAV…TAGF), 431–451 (ITVV…LGVA), and 481–501 (AVCL…LFWI).

This sequence belongs to the complex I subunit 2 family. NDH-1 is composed of 14 different subunits. Subunits NuoA, H, J, K, L, M, N constitute the membrane sector of the complex.

The protein resides in the cell inner membrane. The enzyme catalyses a quinone + NADH + 5 H(+)(in) = a quinol + NAD(+) + 4 H(+)(out). Functionally, NDH-1 shuttles electrons from NADH, via FMN and iron-sulfur (Fe-S) centers, to quinones in the respiratory chain. The immediate electron acceptor for the enzyme in this species is believed to be ubiquinone. Couples the redox reaction to proton translocation (for every two electrons transferred, four hydrogen ions are translocated across the cytoplasmic membrane), and thus conserves the redox energy in a proton gradient. The chain is NADH-quinone oxidoreductase subunit N from Desulfovibrio desulfuricans (strain ATCC 27774 / DSM 6949 / MB).